The sequence spans 1175 residues: Solute carrier family 9 member C1 (1175 aa).

Residues 1-39 (MEMEEISENLTASHSIKLTNMWLELLKSVFLSTPQDLPE) lie on the Extracellular side of the membrane. A helical membrane pass occupies residues 40-59 (IILILSLICTVGAFLNMHLK). Residues 60 to 64 (DFPIP) lie on the Cytoplasmic side of the membrane. The chain crosses the membrane as a helical span at residues 65 to 82 (LPVILFLIGCCFEILSFA). Residues 83 to 98 (STQIQIYADAIQWMDP) are Extracellular-facing. A helical membrane pass occupies residues 99–115 (DIFFGIFTPVIIFNVAF). Residues 116–125 (DMDIYMLQKL) are Cytoplasmic-facing. The helical transmembrane segment at 126–151 (FWQILVITIPGFLINYTLILWYLQSV) threads the bilayer. Residues 126 to 213 (FWQILVITIP…SLVIYSGVVH (88 aa)) are transport core domain. At 152–157 (NKLSLK) the chain is on the extracellular side. A helical transmembrane segment spans residues 158-183 (TVPWLLFSAVLISSDPMLTSASIRDL). Over 184–186 (GLS) the chain is Cytoplasmic. A helical membrane pass occupies residues 187–212 (RSLTNLINGESLLTSVLSLVIYSGVV). Over 213–225 (HIRFKSKSVNHTL) the chain is Extracellular. The chain crosses the membrane as a helical span at residues 226–257 (AHKVMSTAWSYIVESFITGIVFTKVIQLWMAT). At 258 to 261 (IFGD) the chain is on the cytoplasmic side. A helical membrane pass occupies residues 262 to 283 (DVNHITLIFSVLYLIFYVCELV). Topologically, residues 284–286 (GMS) are extracellular. Residues 287–300 (GIFTLATIGLFLNS) traverse the membrane as a helical segment. Residues 301-307 (TSFKPGV) lie on the Cytoplasmic side of the membrane. A helical membrane pass occupies residues 308–339 (EAFLLEFWNCLSFIGFLMVFTFIGLLIPAHTY). Over 340-344 (LHISF) the chain is Extracellular. Residues 345 to 374 (SDVYYSLNIYFTLIVLRLLVFLLMSPILSR) form a helical membrane-spanning segment. The tract at residues 345–446 (SDVYYSLNIY…FILPMAVTKL (102 aa)) is transport core domain. Residues 375–380 (LGHGFS) lie on the Cytoplasmic side of the membrane. A helical membrane pass occupies residues 381-411 (WRWAFIMVWSEMKGTPNINMALLLAYSDISL). Residues 412 to 415 (GSER) lie on the Extracellular side of the membrane. Residues 416–446 (ERSQILFHGVSVCVITLIVNRFILPMAVTKL) form a helical membrane-spanning segment. At 447-632 (GLRDVTSTKY…ACHRIVFTNE (186 aa)) the chain is on the cytoplasmic side. The ion transport-like stretch occupies residues 618–698 (YMFLHACHRI…EFFSHTWLLF (81 aa)). A helical membrane pass occupies residues 633–653 (FEYTGYLVVLMSTYPMIICWI). Residues 654–657 (SRLK) are Extracellular-facing. The chain crosses the membrane as a helical span at residues 658-684 (DIYDNEIKCANYYFLAFYILEALLKVA). The Cytoplasmic segment spans residues 685 to 691 (AMRKEFF). A helical membrane pass occupies residues 692 to 716 (SHTWLLFELGITLVGVLDIILIETD). Residues 717–724 (SISYNFDL) are Extracellular-facing. Residues 725–751 (TETVVFMNVIRLLRILRILKLVTPKLL) traverse the membrane as a helical segment. The Cytoplasmic portion of the chain corresponds to 752-1175 (QIIDKRMSQQ…EELIEENINI (424 aa)). A compositionally biased stretch (basic and acidic residues) spans 1137 to 1146 (MKPDSERESF). The interval 1137–1175 (MKPDSERESFETLDETSEEDNGKKENQENEELIEENINI) is disordered. Residues 1164 to 1175 (ENEELIEENINI) are compositionally biased toward acidic residues.

The protein belongs to the monovalent cation:proton antiporter 1 (CPA1) transporter (TC 2.A.36) family. As to quaternary structure, interacts with soluble adenylyl cyclase (sAC). Testis-specific. Specifically present in the principal piece of sperm tail (at protein level).

Its subcellular location is the cell projection. It localises to the cilium. The protein resides in the flagellum membrane. Sperm-specific solute carrier involved in intracellular pH regulation of spermatozoa. Required for sperm motility and fertility. Involved in sperm cell hyperactivation, a step needed for sperm motility which is essential late in the preparation of sperm for fertilization. Required for the expression and bicarbonate regulation of the soluble adenylyl cyclase (sAC). The protein is Solute carrier family 9 member C1 (Slc9c1) of Mus musculus (Mouse).